The chain runs to 257 residues: 1-(5-phosphoribosyl)-5-[(5-phosphoribosylamino)methylideneamino] imidazole-4-carboxamide isomerase (257 aa).

The Proton acceptor role is filled by Asp-8. The active-site Proton donor is the Asp-129.

It belongs to the HisA/HisF family.

It localises to the cytoplasm. It carries out the reaction 1-(5-phospho-beta-D-ribosyl)-5-[(5-phospho-beta-D-ribosylamino)methylideneamino]imidazole-4-carboxamide = 5-[(5-phospho-1-deoxy-D-ribulos-1-ylimino)methylamino]-1-(5-phospho-beta-D-ribosyl)imidazole-4-carboxamide. It functions in the pathway amino-acid biosynthesis; L-histidine biosynthesis; L-histidine from 5-phospho-alpha-D-ribose 1-diphosphate: step 4/9. This Nostoc punctiforme (strain ATCC 29133 / PCC 73102) protein is 1-(5-phosphoribosyl)-5-[(5-phosphoribosylamino)methylideneamino] imidazole-4-carboxamide isomerase.